A 388-amino-acid polypeptide reads, in one-letter code: Probable RNA-binding protein sce3 (388 aa).

Residues 18–84 (ESFGSTNWAD…GGMGSGYQRD (67 aa)) form a disordered region. Residues 38-50 (DRTTSTYRATPSS) show a composition bias toward polar residues. 3 positions are modified to phosphoserine: Ser-49, Ser-50, and Ser-60. Thr-61 is subject to Phosphothreonine. 3 positions are modified to phosphoserine: Ser-64, Ser-67, and Ser-71. Residues 94–169 (FTAHVGNLSF…RPVRITVAEP (76 aa)) form the RRM domain. The segment covering 171–185 (RSFAREERSTGDWVR) has biased composition (basic and acidic residues). The interval 171-388 (RSFAREERST…WTKIGKGRKH (218 aa)) is disordered. Ser-197 bears the Phosphoserine mark. Residues 208–229 (RFRDPARDPSDRVREEPREWVR) are compositionally biased toward basic and acidic residues. The span at 248 to 257 (PRSSSNVNTE) shows a compositional bias: polar residues. 3 positions are modified to phosphoserine: Ser-250, Ser-251, and Ser-252. The segment covering 258–268 (ATPSATTTTSS) has biased composition (low complexity). Residues 289-349 (RVEEKLAKRT…LGDGEKKSSE (61 aa)) show a composition bias toward basic and acidic residues. Phosphoserine is present on Ser-347.

The protein localises to the cytoplasm. This Schizosaccharomyces pombe (strain 972 / ATCC 24843) (Fission yeast) protein is Probable RNA-binding protein sce3 (sce3).